The chain runs to 534 residues: Ethanolamine kinase (534 aa).

Ser23 is subject to Phosphoserine.

This sequence belongs to the choline/ethanolamine kinase family.

The protein resides in the cytoplasm. It catalyses the reaction ethanolamine + ATP = phosphoethanolamine + ADP + H(+). The enzyme catalyses choline + ATP = phosphocholine + ADP + H(+). It participates in phospholipid metabolism; phosphatidylethanolamine biosynthesis; phosphatidylethanolamine from ethanolamine: step 1/3. Its function is as follows. Catalyzes the committed step of phosphatidylethanolamine synthesis via the CDP-ethanolamine branch of the Kennedy pathway. Also exhibits choline kinase activity, thus contributing to phosphatidylcholine synthesis via the CDP-choline pathway, but its preferred substrate is ethanolamine. This Saccharomyces cerevisiae (strain ATCC 204508 / S288c) (Baker's yeast) protein is Ethanolamine kinase (EKI1).